The primary structure comprises 555 residues: Beta-hexosaminidase A (555 aa).

An N-terminal signal peptide occupies residues 1–18 (MRLLIPILIFALITTAVT). An N-linked (GlcNAc...) asparagine glycan is attached at Asn47. The active-site Proton donor is the Glu325. N-linked (GlcNAc...) asparagine glycans are attached at residues Asn351, Asn412, and Asn460.

This sequence belongs to the glycosyl hydrolase 20 family. In terms of tissue distribution, expressed in coelomocytes and neurons of the pharyngeal region and nerve cord.

It is found in the lysosome. The catalysed reaction is Hydrolysis of terminal non-reducing N-acetyl-D-hexosamine residues in N-acetyl-beta-D-hexosaminides.. In terms of biological role, responsible for the degradation of GM2 gangliosides, and a variety of other molecules containing terminal N-acetyl hexosamines. Degrades chitotriose. This chain is Beta-hexosaminidase A (hex-1), found in Caenorhabditis elegans.